A 184-amino-acid polypeptide reads, in one-letter code: UPF0398 protein OB1025 (184 aa).

This sequence belongs to the UPF0398 family.

This chain is UPF0398 protein OB1025, found in Oceanobacillus iheyensis (strain DSM 14371 / CIP 107618 / JCM 11309 / KCTC 3954 / HTE831).